A 95-amino-acid polypeptide reads, in one-letter code: Co-chaperonin GroES (95 aa).

The protein belongs to the GroES chaperonin family. Heptamer of 7 subunits arranged in a ring. Interacts with the chaperonin GroEL.

The protein resides in the cytoplasm. Together with the chaperonin GroEL, plays an essential role in assisting protein folding. The GroEL-GroES system forms a nano-cage that allows encapsulation of the non-native substrate proteins and provides a physical environment optimized to promote and accelerate protein folding. GroES binds to the apical surface of the GroEL ring, thereby capping the opening of the GroEL channel. The protein is Co-chaperonin GroES of Streptococcus equi subsp. equi (strain 4047).